Consider the following 219-residue polypeptide: Maleylacetoacetate isomerase (219 aa).

The 84-residue stretch at 4-87 folds into the GST N-terminal domain; it reads NKTVLYSYWR…YLEETHPENP (84 aa). Glutathione is bound by residues 14–19, Gln-45, 71–72, Gln-111, and 115–117; these read SSCSWR, QS, and NLK. The 126-residue stretch at 92 to 217 folds into the GST C-terminal domain; the sequence is GSYERAIARQ…LPQNQPDAEP (126 aa).

It belongs to the GST superfamily. Zeta family. The cofactor is glutathione.

It catalyses the reaction 4-maleylacetoacetate = 4-fumarylacetoacetate. It functions in the pathway amino-acid degradation; L-phenylalanine degradation; acetoacetate and fumarate from L-phenylalanine: step 5/6. The polypeptide is Maleylacetoacetate isomerase (mai) (Dictyostelium discoideum (Social amoeba)).